Consider the following 723-residue polypeptide: Probable cadmium-transporting ATPase (723 aa).

The 64-residue stretch at 12-75 folds into the HMA domain; that stretch reads EMKAYRVQGF…AGAFENLKVT (64 aa). C23 and C26 together coordinate Cd(2+). Transmembrane regions (helical) follow at residues 103-123, 127-147, 168-188, 329-349, and 361-381; these read STLL…YVNG, IVTT…LFKV, IGGA…LFAI, YYTP…PLFF, and LAVL…ISIV. D412 acts as the 4-aspartylphosphate intermediate in catalysis. A run of 2 helical transmembrane segments spans residues 671 to 690 and 694 to 716; these read IIKA…LLLV and WLTL…LNGL.

This sequence belongs to the cation transport ATPase (P-type) (TC 3.A.3) family. Type IB subfamily.

The protein localises to the cell membrane. It carries out the reaction Cd(2+)(in) + ATP + H2O = Cd(2+)(out) + ADP + phosphate + H(+). In terms of biological role, couples the hydrolysis of ATP with the export of cadmium. This chain is Probable cadmium-transporting ATPase (cadA), found in Alkalihalophilus pseudofirmus (strain ATCC BAA-2126 / JCM 17055 / OF4) (Bacillus pseudofirmus).